The sequence spans 318 residues: MANEMEFEKPILELKSKIADLKEYNETSDVDLTNEIEKLEKRLAKLEASVYSNMTAWDKFQVARHPERPTTLDYISLLFEDFMELHGDRAFGDDAAIVGGVATFNGIPVTVIGHQRGKDTKDNLHRNFGMPHPEGFRKALRLMKQADKFGRPIICFIDTKGAYPGRAAEERGQSEAIARNLYEMSDMKVPIISIVIGEGGSGGALALGVGNQIFMLENAVFSVISPEGAAAILWKDAGQAKKAAESMRITADDLFELGITDGIIPEVKGGAHRDLTAQAAEINKTITKSLHALMAFSEEQLMNQRYEKFKKIGVYEIL.

The CoA carboxyltransferase C-terminal domain maps to 38–292; the sequence is KLEKRLAKLE…NKTITKSLHA (255 aa).

The protein belongs to the AccA family. As to quaternary structure, acetyl-CoA carboxylase is a heterohexamer composed of biotin carboxyl carrier protein (AccB), biotin carboxylase (AccC) and two subunits each of ACCase subunit alpha (AccA) and ACCase subunit beta (AccD).

It is found in the cytoplasm. The enzyme catalyses N(6)-carboxybiotinyl-L-lysyl-[protein] + acetyl-CoA = N(6)-biotinyl-L-lysyl-[protein] + malonyl-CoA. It functions in the pathway lipid metabolism; malonyl-CoA biosynthesis; malonyl-CoA from acetyl-CoA: step 1/1. In terms of biological role, component of the acetyl coenzyme A carboxylase (ACC) complex. First, biotin carboxylase catalyzes the carboxylation of biotin on its carrier protein (BCCP) and then the CO(2) group is transferred by the carboxyltransferase to acetyl-CoA to form malonyl-CoA. This chain is Acetyl-coenzyme A carboxylase carboxyl transferase subunit alpha, found in Listeria welshimeri serovar 6b (strain ATCC 35897 / DSM 20650 / CCUG 15529 / CIP 8149 / NCTC 11857 / SLCC 5334 / V8).